The primary structure comprises 94 residues: Co-chaperonin GroES (94 aa).

The protein belongs to the GroES chaperonin family. Heptamer of 7 subunits arranged in a ring. Interacts with the chaperonin GroEL.

It is found in the cytoplasm. Functionally, together with the chaperonin GroEL, plays an essential role in assisting protein folding. The GroEL-GroES system forms a nano-cage that allows encapsulation of the non-native substrate proteins and provides a physical environment optimized to promote and accelerate protein folding. GroES binds to the apical surface of the GroEL ring, thereby capping the opening of the GroEL channel. This is Co-chaperonin GroES from Shouchella clausii (strain KSM-K16) (Alkalihalobacillus clausii).